The chain runs to 377 residues: UPF0754 membrane protein RBAM_010020 (377 aa).

2 helical membrane passes run 1–21 and 357–377; these read MGIA…GAVT and YLGG…VILF.

Belongs to the UPF0754 family.

It is found in the cell membrane. The chain is UPF0754 membrane protein RBAM_010020 from Bacillus velezensis (strain DSM 23117 / BGSC 10A6 / LMG 26770 / FZB42) (Bacillus amyloliquefaciens subsp. plantarum).